A 485-amino-acid chain; its full sequence is NADH-quinone oxidoreductase subunit N (485 aa).

Transmembrane regions (helical) follow at residues 8-28 (LIAL…MLSI), 35-55 (FLNA…LWFV), 71-91 (GFAM…CTFA), 105-125 (FYLL…ANHL), 127-147 (SLFL…GYAF), 159-179 (YTIL…LVYA), 203-223 (LLAG…LVPF), 235-255 (PAPV…GVVM), 271-291 (VVLA…ALSQ), 297-317 (LLGY…IALQ), 326-346 (VGVY…VVSL), 373-393 (AAVM…LGFI), 408-430 (WWLV…RVAV), and 455-475 (IVVL…QPLI).

This sequence belongs to the complex I subunit 2 family. In terms of assembly, NDH-1 is composed of 13 different subunits. Subunits NuoA, H, J, K, L, M, N constitute the membrane sector of the complex.

It is found in the cell inner membrane. The enzyme catalyses a quinone + NADH + 5 H(+)(in) = a quinol + NAD(+) + 4 H(+)(out). In terms of biological role, NDH-1 shuttles electrons from NADH, via FMN and iron-sulfur (Fe-S) centers, to quinones in the respiratory chain. The immediate electron acceptor for the enzyme in this species is believed to be ubiquinone. Couples the redox reaction to proton translocation (for every two electrons transferred, four hydrogen ions are translocated across the cytoplasmic membrane), and thus conserves the redox energy in a proton gradient. The protein is NADH-quinone oxidoreductase subunit N of Shigella flexneri.